The chain runs to 122 residues: Large ribosomal subunit protein uL14 (122 aa).

This sequence belongs to the universal ribosomal protein uL14 family. In terms of assembly, part of the 50S ribosomal subunit. Forms a cluster with proteins L3 and L19. In the 70S ribosome, L14 and L19 interact and together make contacts with the 16S rRNA in bridges B5 and B8.

Functionally, binds to 23S rRNA. Forms part of two intersubunit bridges in the 70S ribosome. The polypeptide is Large ribosomal subunit protein uL14 (Oenococcus oeni (strain ATCC BAA-331 / PSU-1)).